The sequence spans 291 residues: MQRFMFSRVVEHQRQISRGFLSLVPSLSPTAVPAMSRFFPKITASDSTSSIPFFTPDFINPKKTLEESLNNLEGLTCNQAEREMYLFPQINQQRLLNTTGSRFGQVLGTWQFRCTILPARVNRVREVHETSNNEKKQQKQKSSVNEKKPKKKKKSSISDIPRRTKFQKHHRGRINKGVSSQGYICSRYALQTLEPAWITSRQIEAGRRAMTRNIGRGLTVRVHIFADKPVTVRPPETRMGRGKGAPAFWVAVVKPGKIIYEMGGVSEKVAREAISIAASKLPAKTKFIISK.

The transit peptide at 1-27 directs the protein to the mitochondrion; it reads MQRFMFSRVVEHQRQISRGFLSLVPSL. The segment covering 127-137 has biased composition (basic and acidic residues); the sequence is VHETSNNEKKQ. The segment at 127 to 173 is disordered; the sequence is VHETSNNEKKQQKQKSSVNEKKPKKKKKSSISDIPRRTKFQKHHRGR. The segment covering 163-173 has biased composition (basic residues); the sequence is RTKFQKHHRGR.

This sequence belongs to the universal ribosomal protein uL16 family.

The protein localises to the mitochondrion. Functionally, could be a component of the large subunit of mitochondrial ribosome. In Arabidopsis thaliana (Mouse-ear cress), this protein is Putative ribosomal protein uL16-like, mitochondrial.